The sequence spans 412 residues: Trehalose synthase (412 aa).

Belongs to the glycosyltransferase group 1 family. Glycosyltransferase 4 subfamily. Homodimer. It depends on Mg(2+) as a cofactor.

The catalysed reaction is an NDP-alpha-D-glucose + D-glucose = alpha,alpha-trehalose + a ribonucleoside 5'-diphosphate + H(+). Its function is as follows. Synthesizes trehalose from ADP-glucose and glucose. Has a much lower activity toward UDP-glucose and GDP-glucose. The reaction is reversible, the equilibrium strongly favors trehalose synthesis. The sequence is that of Trehalose synthase from Pyrococcus furiosus (strain ATCC 43587 / DSM 3638 / JCM 8422 / Vc1).